A 334-amino-acid chain; its full sequence is Glucokinase-like protein XF_1460 (334 aa).

ATP is bound at residue 18-23 (ADVGGT).

This sequence belongs to the bacterial glucokinase family.

The protein is Glucokinase-like protein XF_1460 of Xylella fastidiosa (strain 9a5c).